Reading from the N-terminus, the 105-residue chain is Thioredoxin (105 aa).

The 105-residue stretch at 1 to 105 (MVNNVTDISF…SLLDWINKSI (105 aa)) folds into the Thioredoxin domain. C30 and C33 are oxidised to a cystine.

It belongs to the thioredoxin family.

Component of the thioredoxin-thioredoxin reductase system. Participates in various redox reactions through the reversible oxidation of its active center dithiol to a disulfide and catalyzes dithiol-disulfide exchange reactions. The chain is Thioredoxin (trxA) from Rickettsia typhi (strain ATCC VR-144 / Wilmington).